Consider the following 182-residue polypeptide: UPF0397 protein SAG1634 (182 aa).

The next 5 membrane-spanning stretches (helical) occupy residues 9 to 29, 42 to 62, 74 to 94, 109 to 129, and 148 to 168; these read VVAT…VNIP, AVLA…TGFI, SPWW…GFFA, LLLF…VVAP, and FLSS…LLLA.

The protein belongs to the UPF0397 family.

It localises to the cell membrane. This Streptococcus agalactiae serotype V (strain ATCC BAA-611 / 2603 V/R) protein is UPF0397 protein SAG1634.